The sequence spans 98 residues: NADH-ubiquinone oxidoreductase chain 4L (98 aa).

The next 3 helical transmembrane spans lie at 1 to 21 (MPLI…GMLI), 29 to 49 (SLLC…LMAL), and 61 to 81 (VVLL…LVSI).

Belongs to the complex I subunit 4L family. As to quaternary structure, core subunit of respiratory chain NADH dehydrogenase (Complex I) which is composed of 45 different subunits.

It is found in the mitochondrion inner membrane. It carries out the reaction a ubiquinone + NADH + 5 H(+)(in) = a ubiquinol + NAD(+) + 4 H(+)(out). Its function is as follows. Core subunit of the mitochondrial membrane respiratory chain NADH dehydrogenase (Complex I) which catalyzes electron transfer from NADH through the respiratory chain, using ubiquinone as an electron acceptor. Part of the enzyme membrane arm which is embedded in the lipid bilayer and involved in proton translocation. This chain is NADH-ubiquinone oxidoreductase chain 4L (MT-ND4L), found in Hylobates lar (Lar gibbon).